The sequence spans 281 residues: Penicillin-insensitive murein endopeptidase (281 aa).

The N-terminal stretch at 1–24 (MKQGLIGVLALALGATLLSSAVWA) is a signal peptide. Cystine bridges form between Cys49/Cys270, Cys192/Cys240, and Cys221/Cys228. Residues His115, His118, Asp125, and His216 each coordinate Zn(2+). The segment at 230-271 (EQSEPPIGDGCGAELTSWFQPKQPSSEAPEKTTPPPLPPSCQ) is disordered. The segment covering 246-255 (SWFQPKQPSS) has biased composition (polar residues).

It belongs to the peptidase M74 family. Dimer. Requires Zn(2+) as cofactor.

The protein localises to the periplasm. Functionally, murein endopeptidase that cleaves the D-alanyl-meso-2,6-diamino-pimelyl amide bond that connects peptidoglycan strands. Likely plays a role in the removal of murein from the sacculus. The protein is Penicillin-insensitive murein endopeptidase (mepA) of Pectobacterium atrosepticum (strain SCRI 1043 / ATCC BAA-672) (Erwinia carotovora subsp. atroseptica).